A 356-amino-acid polypeptide reads, in one-letter code: Carbohydrate sulfotransferase 10 (356 aa).

Topologically, residues Met1–Leu6 are cytoplasmic. A helical; Signal-anchor for type II membrane protein membrane pass occupies residues Leu7–Leu27. Over Thr28–Asn356 the chain is Lumenal. N-linked (GlcNAc...) asparagine glycosylation is present at Asn99. Residues Pro127–Gln133 and Arg189–Ser197 each bind 3'-phosphoadenylyl sulfate. N-linked (GlcNAc...) asparagine glycans are attached at residues Asn228 and Asn316.

The protein belongs to the sulfotransferase 2 family. In terms of tissue distribution, in fetal tissues, it is predominantly expressed in brain, and weakly expressed in lung, kidney and liver. In adult, it is highly expressed in brain, testis, ovary, expressed at intermediate level in heart, pancreas, skeletal muscle, spleen and thymus, and weakly expressed in other tissues. In brain, it is expressed at higher level in the frontal lobe.

Its subcellular location is the golgi apparatus membrane. The enzyme catalyses 3-O-{beta-D-GlcA-(1-&gt;[3)-alpha-D-Xyl-(1-&gt;3)-beta-D-GlcA-(1-&gt;](n)-4)-beta-D-Xyl-(1-&gt;4)-Rib-ol-P-Rib-ol-P-3-beta-D-GalNAc-(1-&gt;3)-beta-D-GlcNAc-(1-&gt;4)-O-6-P-alpha-D-Man}-L-Thr-[protein] + 3'-phosphoadenylyl sulfate = 3-O-{O-3-S-beta-D-GlcA-(1-&gt;[3)-alpha-D-Xyl-(1-&gt;3)-beta-D-GlcA-(1-&gt;](n)-4)-beta-D-Xyl-(1-&gt;4)-Rib-ol-P-Rib-ol-P-3-beta-D-GalNAc-(1-&gt;3)-beta-D-GlcNAc-(1-&gt;4)-O-6-P-alpha-D-Man}-L-Thr-[protein] + adenosine 3',5'-bisphosphate + H(+). The catalysed reaction is 17beta-estradiol 3-O-(beta-D-glucuronate) + 3'-phosphoadenylyl sulfate = 17beta-estradiol 3-O-(3-sulfo-beta-D-glucuronate) + adenosine 3',5'-bisphosphate + H(+). It catalyses the reaction 17beta-estradiol 3-O-(beta-D-glucuronate) 17-sulfate + 3'-phosphoadenylyl sulfate = 17beta-estradiol 3-O-(3-sulfo-beta-D-glucuronate) 17-sulfate + adenosine 3',5'-bisphosphate + H(+). It carries out the reaction 17beta-estradiol 17-O-(beta-D-glucuronate) + 3'-phosphoadenylyl sulfate = 17beta-estradiol 17-O-(3-sulfo-beta-D-glucuronate) + adenosine 3',5'-bisphosphate + H(+). The enzyme catalyses 16alpha,17beta-estriol 3-O-(beta-D-glucuronate) + 3'-phosphoadenylyl sulfate = 16alpha,17beta-estriol 3-O-(3-sulfo-beta-D-glucuronate) + adenosine 3',5'-bisphosphate + H(+). The catalysed reaction is 16alpha,17beta-estriol 16-O-(beta-D-glucuronate) + 3'-phosphoadenylyl sulfate = 16alpha,17beta-estriol 16-O-(3-sulfo-beta-D-glucuronate) + adenosine 3',5'-bisphosphate + H(+). It catalyses the reaction 16alpha,17beta-estriol 17-O-(beta-D-glucuronate) + 3'-phosphoadenylyl sulfate = 16alpha,17beta-estriol 17-O-(3-sulfo-beta-D-glucuronate) + adenosine 3',5'-bisphosphate + H(+). It carries out the reaction estrone 3-O-(beta-D-glucuronate) + 3'-phosphoadenylyl sulfate = estrone 3-O-(3-sulfo-beta-D-glucuronate) + adenosine 3',5'-bisphosphate + H(+). The enzyme catalyses 3alpha,20alpha-dihydroxy-5beta-pregnane 3-O-(beta-D-glucuronate) + 3'-phosphoadenylyl sulfate = 3alpha,20alpha-dihydroxy-5beta-pregnane 3-O-(3-sulfo-beta-D-glucuronate) + adenosine 3',5'-bisphosphate + H(+). The catalysed reaction is testosterone 17-O-(beta-D-glucuronate) + 3'-phosphoadenylyl sulfate = testosterone 17-O-(3-sulfo-beta-D-glucuronate) + adenosine 3',5'-bisphosphate + H(+). It catalyses the reaction 3beta-androst-5-en-17-one 3-O-(beta-D-glucuronate) + 3'-phosphoadenylyl sulfate = 3beta-androst-5-en-17-one 3-O-(3-sulfo-beta-D-glucuronate) + adenosine 3',5'-bisphosphate + H(+). It carries out the reaction 3alpha,17alpha-dihydroxy-5beta-androstane-11-one-17beta-carboxylate 3-O-(beta-D-glucuronate) + 3'-phosphoadenylyl sulfate = 3alpha,17alpha-dihydroxy-5beta-androstane-11-one-17beta-carboxylate 3-O-(3-sulfo-beta-D-glucuronate) + adenosine 3',5'-bisphosphate + H(+). The enzyme catalyses 3alpha-hydroxyetiocholan-17-one 3-O-(beta-D-glucuronate) + 3'-phosphoadenylyl sulfate = 3alpha-hydroxyetiocholan-17-one 3-O-(3-sulfo-beta-D-glucuronate) + adenosine 3',5'-bisphosphate + H(+). It functions in the pathway steroid metabolism. Its pathway is protein modification; carbohydrate sulfation. Catalyzes the transfer of sulfate from 3'-phosphoadenylyl sulfate (PAPS) to position 3 of terminal glucuronic acid of both protein- and lipid-linked oligosaccharides. Participates in biosynthesis of HNK-1 carbohydrate structure 3-O-sulfo-beta-D-GlcA-(1-&gt;3)-beta-D-Gal-(1-&gt;4)-D-GlcNAc-R, a sulfated glucuronyl-lactosaminyl residue carried by many neural recognition molecules, which is involved in cell interactions during ontogenetic development and in synaptic plasticity in the adult. May be indirectly involved in synapse plasticity of the hippocampus, via its role in HNK-1 biosynthesis. Sulfates terminal glucuronyl residue of the laminin globular (LG)-domain binding epitope on DAG1/alpha-dystroglycan and prevents further polymerization by LARGE1 glycosyltransferase. Likely defines the chain length of LG epitope, conferring binding specificity to extracellular matrix components. Plays a role in down-regulating the steroid hormones. Sulfates glucuronidated estrogens and androgens with an impact in hormone cycle and fertility. Has a preference for glucuronyl moiety at the 3-hydroxyl group of a sterol ring rather than the 17-hydroxyl group, showing high catalytic efficiency for 17beta-estradiol 3-O-(beta-D-glucuronate) and dehydroepiandrosterone 3-O-(beta-D-glucuronate) hormones. This chain is Carbohydrate sulfotransferase 10, found in Homo sapiens (Human).